Consider the following 343-residue polypeptide: UDP-N-acetylglucosamine--N-acetylmuramyl-(pentapeptide) pyrophosphoryl-undecaprenol N-acetylglucosamine transferase (343 aa).

Residues 10-12 (TGG), N113, S174, and Q275 contribute to the UDP-N-acetyl-alpha-D-glucosamine site.

This sequence belongs to the glycosyltransferase 28 family. MurG subfamily.

It is found in the cell membrane. It carries out the reaction di-trans,octa-cis-undecaprenyl diphospho-N-acetyl-alpha-D-muramoyl-L-alanyl-D-glutamyl-meso-2,6-diaminopimeloyl-D-alanyl-D-alanine + UDP-N-acetyl-alpha-D-glucosamine = di-trans,octa-cis-undecaprenyl diphospho-[N-acetyl-alpha-D-glucosaminyl-(1-&gt;4)]-N-acetyl-alpha-D-muramoyl-L-alanyl-D-glutamyl-meso-2,6-diaminopimeloyl-D-alanyl-D-alanine + UDP + H(+). It functions in the pathway cell wall biogenesis; peptidoglycan biosynthesis. In terms of biological role, cell wall formation. Catalyzes the transfer of a GlcNAc subunit on undecaprenyl-pyrophosphoryl-MurNAc-pentapeptide (lipid intermediate I) to form undecaprenyl-pyrophosphoryl-MurNAc-(pentapeptide)GlcNAc (lipid intermediate II). The chain is UDP-N-acetylglucosamine--N-acetylmuramyl-(pentapeptide) pyrophosphoryl-undecaprenol N-acetylglucosamine transferase from Wolbachia sp. subsp. Drosophila simulans (strain wRi).